We begin with the raw amino-acid sequence, 437 residues long: GTPase Obg (437 aa).

The region spanning 2–160 (SMFLDTAKIS…RELQLELKIL (159 aa)) is the Obg domain. An OBG-type G domain is found at 161–338 (ADVGLVGFPS…LMDATAELLA (178 aa)). Residues 167-174 (GFPSVGKS), 192-196 (FTTIV), 214-217 (DLPG), 284-287 (NKMD), and 319-321 (SSL) each bind GTP. Residues serine 174 and threonine 194 each contribute to the Mg(2+) site. The OCT domain maps to 359–437 (GFNEDERPFE…IGNFEFEFVD (79 aa)).

Belongs to the TRAFAC class OBG-HflX-like GTPase superfamily. OBG GTPase family. As to quaternary structure, monomer. Mg(2+) is required as a cofactor.

Its subcellular location is the cytoplasm. In terms of biological role, an essential GTPase which binds GTP, GDP and possibly (p)ppGpp with moderate affinity, with high nucleotide exchange rates and a fairly low GTP hydrolysis rate. Plays a role in control of the cell cycle, stress response, ribosome biogenesis and in those bacteria that undergo differentiation, in morphogenesis control. This is GTPase Obg from Streptococcus agalactiae serotype Ia (strain ATCC 27591 / A909 / CDC SS700).